The chain runs to 129 residues: MMIDTIADMLTRIRNANQRLHKSVKMPSSKMKVRIAEILKKEGYVEDFKVSGDIKKDLTLTLKYKGKTKVISGLKRISKPGLRVYVTVEEVPQVLNGMGIAIISTNQGIMTDKAAKKAHLGGEVIAYVW.

The protein belongs to the universal ribosomal protein uS8 family. Part of the 30S ribosomal subunit. Contacts proteins S5 and S12.

Its function is as follows. One of the primary rRNA binding proteins, it binds directly to 16S rRNA central domain where it helps coordinate assembly of the platform of the 30S subunit. The protein is Small ribosomal subunit protein uS8 of Spiroplasma kunkelii.